A 467-amino-acid polypeptide reads, in one-letter code: H(+)/Cl(-) exchange transporter ClcA (467 aa).

Residues 1 to 30 are Cytoplasmic-facing; it reads MTKRERIIQSVLVKVPKDAINQFLSHGSTP. A helical membrane pass occupies residues 31-67; it reads ISVLFLAALVGVLAGLVGTYFEIAVHFVSETRTEWLK. Residues 68–74 lie on the Periplasmic side of the membrane; that stretch reads SEIGHLL. Residues 75–98 traverse the membrane as a helical segment; that stretch reads PLWLAAILISAALAFVGYFLVHRF. Residues 104 to 108 carry the Selectivity filter part_1 motif; the sequence is GSGIP. Chloride is bound at residue Ser-105. An intramembrane region (helical) is located at residues 107–114; that stretch reads IPEIEGAM. Topologically, residues 115 to 121 are cytoplasmic; that stretch reads DNIRPVR. Transmembrane regions (helical) follow at residues 122-139 and 146-164; these read WWRV…ALGS and EGPT…TDIF. The short motif at 144–148 is the Selectivity filter part_2 element; the sequence is GREGP. Residues 165-174 lie on the Cytoplasmic side of the membrane; that stretch reads RVKDDDTRHS. 2 consecutive intramembrane regions (helical) follow at residues 175–187 and 191–199; these read LLAS…LAAA and PLAGIMFVV. The Cytoplasmic segment spans residues 200-212; sequence EEMRPQFRYSLIS. The helical transmembrane segment at 213–230 threads the bilayer; that stretch reads IRAVIISAVMANIVFRAI. Topologically, residues 231 to 250 are periplasmic; it reads NGQDAVITMPQYQPPELKAL. The helical transmembrane segment at 251–279 threads the bilayer; it reads WLFLLLGGLFGVFGVLFNKLVTVAQDAFV. The Cytoplasmic portion of the chain corresponds to 280–285; it reads ALHKND. Residues 286–307 form a helical membrane-spanning segment; that stretch reads RKRYLITGTCLGGIFGLLLLYV. At 308 to 327 the chain is on the periplasmic side; the sequence is PELTGGGIHLIPDVTNGNYS. Transmembrane regions (helical) follow at residues 328 to 347 and 353 to 374; these read VSLL…ICFG and GIFA…ATAK. The short motif at 353-357 is the Selectivity filter part_3 element; that stretch reads GIFAP. Positions 354 and 355 each coordinate chloride. Topologically, residues 375–384 are periplasmic; that stretch reads ILLPDLPIEP. An intramembrane region (helical) is located at residues 385–399; it reads GMFAIAGMGALFAAT. The note=Loop between two helices intramembrane region spans 400–402; that stretch reads VRA. Residues 403–414 constitute an intramembrane region (helical); that stretch reads PITGILLVIEMT. The segment at residues 415 to 419 is an intramembrane region (note=Loop between two helices); the sequence is NNYYL. The chain crosses the membrane as a helical span at residues 420–436; the sequence is ILPLIITSLGAVICAQI. The Cytoplasmic portion of the chain corresponds to 437 to 467; the sequence is CGGKPIYSQLLHRTIKNDKLRQQDLPEQQNS. Tyr-443 lines the chloride pocket.

The protein belongs to the chloride channel (TC 2.A.49) family. ClcA subfamily. As to quaternary structure, homodimer.

The protein localises to the cell inner membrane. The catalysed reaction is 2 chloride(in) + H(+)(out) = 2 chloride(out) + H(+)(in). Its function is as follows. Proton-coupled chloride transporter. Functions as antiport system and exchanges two chloride ions for 1 proton. Probably acts as an electrical shunt for an outwardly-directed proton pump that is linked to amino acid decarboxylation, as part of the extreme acid resistance (XAR) response. This is H(+)/Cl(-) exchange transporter ClcA from Vibrio vulnificus (strain CMCP6).